The following is a 73-amino-acid chain: Translation initiation factor IF-1 (73 aa).

Positions 1–73 (MANKEELIEF…SKGRITYRAR (73 aa)) constitute an S1-like domain.

This sequence belongs to the IF-1 family. Component of the 30S ribosomal translation pre-initiation complex which assembles on the 30S ribosome in the order IF-2 and IF-3, IF-1 and N-formylmethionyl-tRNA(fMet); mRNA recruitment can occur at any time during PIC assembly.

It localises to the cytoplasm. In terms of biological role, one of the essential components for the initiation of protein synthesis. Stabilizes the binding of IF-2 and IF-3 on the 30S subunit to which N-formylmethionyl-tRNA(fMet) subsequently binds. Helps modulate mRNA selection, yielding the 30S pre-initiation complex (PIC). Upon addition of the 50S ribosomal subunit IF-1, IF-2 and IF-3 are released leaving the mature 70S translation initiation complex. This Acinetobacter baylyi (strain ATCC 33305 / BD413 / ADP1) protein is Translation initiation factor IF-1.